The primary structure comprises 281 residues: MNTPEHSELGKSSAYVDQYDASLLFPIPRLAKRLEMGVGATPIFFGADLWTAFELSWLNLRGKPQVALAQFIVPCETPNIIESKSFKLYLNSFNNTRFPDAAEVQARLRADISEAAWRGAPQASTVGVKLLLPEMFDREDVAELDGLSLDRLDVECSRYTPAPDLLSAVFDEPPVSEVLTSNLLKSNCLVTGQPDWGSVRIAYSGPQINQEGLLQYIVSFRNHNEFHEQCVERIFMDLWTRCKPVKLTVYARYTRRGGLDINPFRTSHPQAIPPNIRMARQ.

Position 81-83 (81-83 (IES)) interacts with substrate. Position 83 to 84 (83 to 84 (SK)) interacts with NADPH. Catalysis depends on cysteine 188, which acts as the Thioimide intermediate. The Proton donor role is filled by aspartate 195. A substrate-binding site is contributed by 227–228 (HE). 256-257 (RG) serves as a coordination point for NADPH.

The protein belongs to the GTP cyclohydrolase I family. QueF type 2 subfamily. Homodimer.

It localises to the cytoplasm. The catalysed reaction is 7-aminomethyl-7-carbaguanine + 2 NADP(+) = 7-cyano-7-deazaguanine + 2 NADPH + 3 H(+). Its pathway is tRNA modification; tRNA-queuosine biosynthesis. Its function is as follows. Catalyzes the NADPH-dependent reduction of 7-cyano-7-deazaguanine (preQ0) to 7-aminomethyl-7-deazaguanine (preQ1). This chain is NADPH-dependent 7-cyano-7-deazaguanine reductase, found in Polaromonas naphthalenivorans (strain CJ2).